We begin with the raw amino-acid sequence, 416 residues long: Pectin acetylesterase 3 (416 aa).

The signal sequence occupies residues 1-25 (MKSVLRIAAAIFWLWLFIVLGVIGS). Residue Asn-131 is glycosylated (N-linked (GlcNAc...) asparagine). Catalysis depends on charge relay system residues Ser-198 and Asp-294. Asn-324 carries an N-linked (GlcNAc...) asparagine glycan. Catalysis depends on His-361, which acts as the Charge relay system.

Belongs to the pectinacetylesterase family.

Its subcellular location is the secreted. The protein localises to the cell wall. In terms of biological role, hydrolyzes acetyl esters in homogalacturonan regions of pectin. In type I primary cell wall, galacturonic acid residues of pectin can be acetylated at the O-2 and O-3 positions. Decreasing the degree of acetylation of pectin gels in vitro alters their physical properties. In Arabidopsis thaliana (Mouse-ear cress), this protein is Pectin acetylesterase 3.